Consider the following 354-residue polypeptide: MRYLLIVITFFMGFSSLPAWAMDCYAEHEGGNTVVIGYVPRISIPSDGKKGDKIWQSSEYFMNVFCNNALPGPSPGEEYPSAWANIMMLLASGQDFYNQNSYTFGVTYNGVDYDSTSPLPIAAPVCIDIKGAGTFGNGYKKPAVCSGGPEPQLSVTFPVRVQLYIKLAKNANKVNKKLVLPDEYIALEFKGMSGAGAIEVDKNLTFRIRGLNNIHVLDCFVNVDLEPADGVVDFGKINSRTIKNTSVSETFSVVMTKDPGAACTEQFNILGSFFTTDILSDYSHLDIGNGLLLKIFHNDGTATEFNRFSQFASFSSSSAPSVTAPFRAELSANPAETVVEGPFSKDVILKITYN.

Positions 1–21 are cleaved as a signal peptide; it reads MRYLLIVITFFMGFSSLPAWA.

The protein to E.coli YbgO.

Its function is as follows. May be involved in a fimbrial system chaperoned by YqiH and exported by YqiG. This is an uncharacterized protein from Escherichia coli (strain K12).